Here is a 175-residue protein sequence, read N- to C-terminus: Nucleoside triphosphate/diphosphate phosphatase (175 aa).

Arginine 23 serves as the catalytic Proton donor. Mg(2+)-binding residues include asparagine 87, aspartate 103, aspartate 105, aspartate 107, aspartate 120, and glutamate 123.

Belongs to the Ntdp family. It depends on Mg(2+) as a cofactor.

The catalysed reaction is a ribonucleoside 5'-triphosphate + H2O = a ribonucleoside 5'-diphosphate + phosphate + H(+). It carries out the reaction a ribonucleoside 5'-diphosphate + H2O = a ribonucleoside 5'-phosphate + phosphate + H(+). In terms of biological role, has nucleoside phosphatase activity towards nucleoside triphosphates and nucleoside diphosphates. The sequence is that of Nucleoside triphosphate/diphosphate phosphatase from Listeria monocytogenes serotype 4b (strain CLIP80459).